We begin with the raw amino-acid sequence, 347 residues long: Beta carbonic anhydrase 1, chloroplastic (347 aa).

The N-terminal 113 residues, 1 to 113 (MSTAPLSGFF…AAAKVEQITA (113 aa)), are a transit peptide targeting the chloroplast. Ala114 is subject to N-acetylalanine. Position 175 is a phosphoserine (Ser175). Position 203 is a phosphotyrosine (Tyr203). Ser266 carries the post-translational modification Phosphoserine. At Cys280 the chain carries S-nitrosocysteine.

The protein belongs to the beta-class carbonic anhydrase family. Homohexamer. S-nitrosylation at Cys-280 is up-regulated during nitrosative burst and suppresses both binding of salicylic acid and carbonic anhydrase activity. S-nitrosylated in response to an avirulent but not to a virulent bacterial strain. In terms of tissue distribution, strongly expressed in aerial tissues including leaves, stems, flowers and siliques. Accumulates in both guard cells and mesophyll cells.

It is found in the plastid. It localises to the chloroplast stroma. Its subcellular location is the cell membrane. It carries out the reaction hydrogencarbonate + H(+) = CO2 + H2O. In terms of biological role, reversible hydration of carbon dioxide. Required for photosynthesis in cotyledons. Binds salicylic acid. Together with BCA4, involved in the CO(2) signaling pathway which controls gas-exchange between plants and the atmosphere by modulating stomatal development and movements. Promotes water use efficiency. The sequence is that of Beta carbonic anhydrase 1, chloroplastic from Arabidopsis thaliana (Mouse-ear cress).